The sequence spans 350 residues: Inositol 2-dehydrogenase/D-chiro-inositol 3-dehydrogenase (350 aa).

The protein belongs to the Gfo/Idh/MocA family. Homotetramer.

It catalyses the reaction myo-inositol + NAD(+) = scyllo-inosose + NADH + H(+). It carries out the reaction 1D-chiro-inositol + NAD(+) = scyllo-inosine + NADH + H(+). Its pathway is polyol metabolism; myo-inositol degradation into acetyl-CoA; acetyl-CoA from myo-inositol: step 1/7. In terms of biological role, involved in the oxidation of myo-inositol (MI) and D-chiro-inositol (DCI) to 2-keto-myo-inositol (2KMI or 2-inosose) and 1-keto-D-chiro-inositol (1KDCI), respectively. The sequence is that of Inositol 2-dehydrogenase/D-chiro-inositol 3-dehydrogenase from Lactiplantibacillus plantarum (strain ATCC BAA-793 / NCIMB 8826 / WCFS1) (Lactobacillus plantarum).